The primary structure comprises 137 residues: Large ribosomal subunit protein uL16 (137 aa).

It belongs to the universal ribosomal protein uL16 family. In terms of assembly, part of the 50S ribosomal subunit.

Binds 23S rRNA and is also seen to make contacts with the A and possibly P site tRNAs. In Acinetobacter baumannii (strain AB307-0294), this protein is Large ribosomal subunit protein uL16.